The following is a 543-amino-acid chain: MKSTLSLTLCVISLLLTLFLAALDIVIVVTLYDTIGIKFHDFGNIGWLVTGYALSNAVFMLLWGRLAEILGTKECLMISVIVFEIGSLISALSNSMATLISGRVVAGFGGSGIESLAFVVGTSIVRENHRGIMITALAISYVIAEGVGPFIGGAFNEHLSWRWCFYINLPIGAFAFIILAFCNTSGEPHQKMWLPSKIKKIMNYDYGELLKASFWKNTFEVLVFKLDMVGIILSSAGFTLLMLGLSFGGNNFPWNSGIIICFFTVGPILLLLFCAYDFHFLSLSGLHYDNKRIKPLLTWNIASNCGIFTSSITGFLSCFAYELQSAYLVQLYQLVFKKKPTLASIHLWELSIPAMIATMAIAYLNSKYGIIKPAIVFGVLCGIVGSGLFTLINGELSQSIGYSILPGIAFGSIFQATLLSSQVQITSDDPDFQNKFIEVTAFNSFAKSLGFAFGGNMGAMIFTASLKNQMRSSQLNIPQFTSVETLLAYSTEHYDGPQSSLSKFINTAIHDVFYCALGCYALSFFFGIFTSSKKTTISAKKQQ.

Residues 1–8 are Cytoplasmic-facing; the sequence is MKSTLSLT. Residues 9–29 traverse the membrane as a helical segment; it reads LCVISLLLTLFLAALDIVIVV. The Extracellular portion of the chain corresponds to 30–41; it reads TLYDTIGIKFHD. Residues 42–62 form a helical membrane-spanning segment; sequence FGNIGWLVTGYALSNAVFMLL. Over 63–79 the chain is Cytoplasmic; sequence WGRLAEILGTKECLMIS. The helical transmembrane segment at 80–100 threads the bilayer; sequence VIVFEIGSLISALSNSMATLI. Residues 101 to 103 are Extracellular-facing; that stretch reads SGR. The chain crosses the membrane as a helical span at residues 104–124; that stretch reads VVAGFGGSGIESLAFVVGTSI. Residues 125 to 131 lie on the Cytoplasmic side of the membrane; the sequence is VRENHRG. A helical membrane pass occupies residues 132-152; it reads IMITALAISYVIAEGVGPFIG. Topologically, residues 153-162 are extracellular; sequence GAFNEHLSWR. The chain crosses the membrane as a helical span at residues 163-183; that stretch reads WCFYINLPIGAFAFIILAFCN. At 184 to 227 the chain is on the cytoplasmic side; that stretch reads TSGEPHQKMWLPSKIKKIMNYDYGELLKASFWKNTFEVLVFKLD. The chain crosses the membrane as a helical span at residues 228-248; that stretch reads MVGIILSSAGFTLLMLGLSFG. Over 249 to 255 the chain is Extracellular; the sequence is GNNFPWN. A helical transmembrane segment spans residues 256 to 276; it reads SGIIICFFTVGPILLLLFCAY. At 277-300 the chain is on the cytoplasmic side; it reads DFHFLSLSGLHYDNKRIKPLLTWN. Residues 301–321 form a helical membrane-spanning segment; that stretch reads IASNCGIFTSSITGFLSCFAY. Over 322–341 the chain is Extracellular; it reads ELQSAYLVQLYQLVFKKKPT. Residues 342–362 form a helical membrane-spanning segment; sequence LASIHLWELSIPAMIATMAIA. The Cytoplasmic portion of the chain corresponds to 363–373; sequence YLNSKYGIIKP. The helical transmembrane segment at 374–394 threads the bilayer; that stretch reads AIVFGVLCGIVGSGLFTLING. The Extracellular segment spans residues 395–399; sequence ELSQS. A helical transmembrane segment spans residues 400–420; that stretch reads IGYSILPGIAFGSIFQATLLS. At 421-443 the chain is on the cytoplasmic side; that stretch reads SQVQITSDDPDFQNKFIEVTAFN. A helical transmembrane segment spans residues 444–464; the sequence is SFAKSLGFAFGGNMGAMIFTA. At 465-508 the chain is on the extracellular side; it reads SLKNQMRSSQLNIPQFTSVETLLAYSTEHYDGPQSSLSKFINTA. The chain crosses the membrane as a helical span at residues 509-529; sequence IHDVFYCALGCYALSFFFGIF. Topologically, residues 530–543 are cytoplasmic; the sequence is TSSKKTTISAKKQQ.

Belongs to the major facilitator superfamily.

Its subcellular location is the membrane. Functionally, drug export permease. Multi-copy suppressor of loss-of-function mutation of GAL11. Involved specifically in transcription of GAL4-dependent genes. Can link GAL4 with the basal transcription machinery if GAL11 is missing. Confers resistance to 10-N-nonyl acridine orange (NAO) and in general to cationic dyes. This chain is Protein SGE1 (SGE1), found in Saccharomyces cerevisiae (strain ATCC 204508 / S288c) (Baker's yeast).